Consider the following 137-residue polypeptide: Kunitz-type trypsin inhibitor alpha chain (137 aa).

Cys-40 and Cys-86 are joined by a disulfide.

This sequence belongs to the protease inhibitor I3 (leguminous Kunitz-type inhibitor) family. In terms of assembly, heterodimer of an alpha and a beta chain linked by a disulfide bond.

In terms of biological role, inhibition of trypsin. In Neltuma juliflora (Mesquite), this protein is Kunitz-type trypsin inhibitor alpha chain.